The chain runs to 455 residues: GTPase Der (455 aa).

2 consecutive EngA-type G domains span residues 4–169 (PVVA…PPKS) and 178–353 (IQLA…EQHR). Residues 10–17 (GRPNVGKS), 57–61 (DTGGL), 120–123 (NKCE), 184–191 (GRPNVGKS), 231–235 (DTAGI), and 296–299 (NKWD) each bind GTP. Residues 354–439 (RRVSTSVVNE…PLKLFWRGKQ (86 aa)) form the KH-like domain.

This sequence belongs to the TRAFAC class TrmE-Era-EngA-EngB-Septin-like GTPase superfamily. EngA (Der) GTPase family. In terms of assembly, associates with the 50S ribosomal subunit.

Functionally, GTPase that plays an essential role in the late steps of ribosome biogenesis. The protein is GTPase Der of Synechococcus sp. (strain WH7803).